We begin with the raw amino-acid sequence, 124 residues long: Alpha-endosulfine (124 aa).

S74 carries the phosphoserine; by GWL modification. The segment at 99-124 is disordered; it reads VTGDHIPTPQDLPQRKNTILTSKLAG. Residues 113-124 are compositionally biased toward polar residues; that stretch reads RKNTILTSKLAG.

It belongs to the endosulfine family. Post-translationally, phosphorylation at Ser-74 by gwl during mitosis is essential for interaction with ppp2r2d (PR55-delta) and subsequent inactivation of PP2A.

The protein localises to the cytoplasm. Protein phosphatase inhibitor that specifically inhibits protein phosphatase 2A (PP2A) during mitosis. When phosphorylated at Ser-67 during mitosis, specifically interacts with ppp2r2d (PR55-delta) and inhibits its activity, leading to inactivation of PP2A, an essential condition to keep cyclin-B1-CDK1 activity high during M phase. The polypeptide is Alpha-endosulfine (ensa) (Danio rerio (Zebrafish)).